We begin with the raw amino-acid sequence, 235 residues long: Carbohydrate deacetylase (235 aa).

Residues His-61 and His-124 each coordinate Mg(2+).

This sequence belongs to the YdjC deacetylase family. It depends on Mg(2+) as a cofactor.

Probably catalyzes the deacetylation of acetylated carbohydrates an important step in the degradation of oligosaccharides. The sequence is that of Carbohydrate deacetylase from Bacillus cereus (strain 03BB102).